Reading from the N-terminus, the 542-residue chain is Chaperonin GroEL 1 (542 aa).

ATP is bound by residues 29 to 32, 86 to 90, glycine 413, 477 to 479, and aspartate 493; these read TLGP, DGTTT, and NAA.

Belongs to the chaperonin (HSP60) family. Forms a cylinder of 14 subunits composed of two heptameric rings stacked back-to-back. Interacts with the co-chaperonin GroES.

The protein localises to the cytoplasm. The catalysed reaction is ATP + H2O + a folded polypeptide = ADP + phosphate + an unfolded polypeptide.. Functionally, together with its co-chaperonin GroES, plays an essential role in assisting protein folding. The GroEL-GroES system forms a nano-cage that allows encapsulation of the non-native substrate proteins and provides a physical environment optimized to promote and accelerate protein folding. This is Chaperonin GroEL 1 from Renibacterium salmoninarum (strain ATCC 33209 / DSM 20767 / JCM 11484 / NBRC 15589 / NCIMB 2235).